The chain runs to 174 residues: NADH-ubiquinone oxidoreductase chain 6 (174 aa).

The next 5 helical transmembrane spans lie at 1–21 (MTYV…GFSS), 24–44 (SPIY…AIIL), 47–67 (GGGY…MVVF), 86–106 (VEVL…VLWV), and 151–171 (WLVV…IEIA).

Belongs to the complex I subunit 6 family. As to quaternary structure, core subunit of respiratory chain NADH dehydrogenase (Complex I) which is composed of 45 different subunits.

It is found in the mitochondrion inner membrane. The enzyme catalyses a ubiquinone + NADH + 5 H(+)(in) = a ubiquinol + NAD(+) + 4 H(+)(out). Functionally, core subunit of the mitochondrial membrane respiratory chain NADH dehydrogenase (Complex I) which catalyzes electron transfer from NADH through the respiratory chain, using ubiquinone as an electron acceptor. Essential for the catalytic activity and assembly of complex I. In Gorilla gorilla gorilla (Western lowland gorilla), this protein is NADH-ubiquinone oxidoreductase chain 6 (MT-ND6).